A 377-amino-acid chain; its full sequence is Unsaturated 3S-rhamnoglycuronyl hydrolase (377 aa).

An N-terminal signal peptide occupies residues Met-1–Ala-25. Catalysis depends on Asp-161, which acts as the Proton donor.

The protein belongs to the glycosyl hydrolase 105 family.

The protein resides in the periplasm. In terms of biological role, unsaturated beta-glucuronyl hydrolase involved in ulvan degradation. Ulvan is the main polysaccharide component of the Ulvales (green seaweed) cell wall. It is composed of disaccharide building blocks comprising 3-sulfated rhamnose (Rha3S) linked to D-glucuronic acid (GlcA), L-iduronic acid (IduA), or D-xylose (Xyl). Unsaturated 3S-rhamnoglycuronyl hydrolase works together with ulvan lyases to fully degrade the ulvan polymer, catalyzing specifically the cleavage of the unsaturated 4-deoxy-L-threo-hex-4-enopyranosiduronic acid (deltaUA) of deltaUA-Rha3S disaccharides and deltaUA-Rha3S-Xyl-Rha3S tetrasaccharides, the end products of the ulvan lyase reaction. Also hydrolases deltaUA-Rha3S-IduA-Rha3S and deltaUA-Rha3S-GlcA-Rha3S tetrasaccharidestetrasaccharides. Prefers tetrasaccharides over disaccharides and prefers an uronic residue at subsite +2. This chain is Unsaturated 3S-rhamnoglycuronyl hydrolase, found in Formosa agariphila (strain DSM 15362 / KCTC 12365 / LMG 23005 / KMM 3901 / M-2Alg 35-1).